The sequence spans 277 residues: Caspase-3 (277 aa).

Position 1 is an N-acetylmethionine (methionine 1). 2 propeptides span residues 1–9 and 10–28; these read MENNETSVD and SKSIKNFEVKTIHGSKSMD. Residue lysine 11 is modified to N6-acetyllysine. Serine 26 is subject to Phosphoserine. Active-site residues include histidine 121 and cysteine 163. Cysteine 163 carries the post-translational modification S-nitrosocysteine; in inhibited form.

The protein belongs to the peptidase C14A family. As to quaternary structure, heterotetramer that consists of two anti-parallel arranged heterodimers, each one formed by a 17 kDa (p17) and a 12 kDa (p12) subunit. Interacts with BIRC6/bruce. In terms of processing, cleavage by granzyme B, caspase-6, caspase-8 and caspase-10 generates the two active subunits. Additional processing of the propeptides is likely due to the autocatalytic activity of the activated protease. Active heterodimers between the small subunit of caspase-7 protease and the large subunit of caspase-3 also occur and vice versa. Post-translationally, S-nitrosylated on its catalytic site cysteine in unstimulated cell lines and denitrosylated upon activation of the Fas apoptotic pathway, associated with an increase in intracellular caspase activity. Fas therefore activates caspase-3 not only by inducing the cleavage of the caspase zymogen to its active subunits, but also by stimulating the denitrosylation of its active site thiol. Ubiquitinated by BIRC6; this activity is inhibited by DIABLO/SMAC.

It localises to the cytoplasm. The enzyme catalyses Strict requirement for an Asp residue at positions P1 and P4. It has a preferred cleavage sequence of Asp-Xaa-Xaa-Asp-|- with a hydrophobic amino-acid residue at P2 and a hydrophilic amino-acid residue at P3, although Val or Ala are also accepted at this position.. With respect to regulation, inhibited by BIRC6; following inhibition of BIRC6-caspase binding by DIABLO/SMAC, BIRC6 is subjected to caspase cleavage, leading to an increase in active caspases. In terms of biological role, involved in the activation cascade of caspases responsible for apoptosis execution. At the onset of apoptosis, it proteolytically cleaves poly(ADP-ribose) polymerase PARP1 at a '216-Asp-|-Gly-217' bond. Cleaves and activates sterol regulatory element binding proteins (SREBPs) between the basic helix-loop-helix leucine zipper domain and the membrane attachment domain. Cleaves and activates caspase-6, -7 and -9 (CASP6, CASP7 and CASP9, respectively). Cleaves and inactivates interleukin-18 (IL18). Triggers cell adhesion in sympathetic neurons through RET cleavage. Cleaves IL-1 beta between an Asp and an Ala, releasing the mature cytokine which is involved in a variety of inflammatory processes. Cleaves and inhibits serine/threonine-protein kinase AKT1 in response to oxidative stress. Acts as an inhibitor of type I interferon production during virus-induced apoptosis by mediating cleavage of antiviral proteins CGAS, IRF3 and MAVS, thereby preventing cytokine overproduction. Also involved in pyroptosis by mediating cleavage and activation of gasdermin-E (GSDME). Cleaves XRCC4 and phospholipid scramblase proteins XKR4, XKR8 and XKR9, leading to promote phosphatidylserine exposure on apoptotic cell surface. Cleaves BIRC6 following inhibition of BIRC6-caspase binding by DIABLO/SMAC. The sequence is that of Caspase-3 (CASP3) from Mesocricetus auratus (Golden hamster).